The sequence spans 590 residues: Myo-inositol transporter 3C (590 aa).

The Cytoplasmic segment spans residues 1 to 63 (MSRTPSSLDK…GEDKVTPYLC (63 aa)). The chain crosses the membrane as a helical span at residues 64–86 (FLISASAIAGFLFGYDTGVVGVA). The Extracellular portion of the chain corresponds to 87–105 (LPLVGTDLGGSVLSSSQQE). A helical transmembrane segment spans residues 106 to 126 (IITAGTTIGAIFGSAILGGWG). The Cytoplasmic portion of the chain corresponds to 127 to 132 (DRLGRK). The helical transmembrane segment at 133 to 153 (VAILIADVFFTVGAVLIAASY) threads the bilayer. The Extracellular portion of the chain corresponds to 154 to 162 (SVPQMIVGR). The chain crosses the membrane as a helical span at residues 163 to 183 (IVLGVGVGGAAAIAPLFITET). The Cytoplasmic portion of the chain corresponds to 184-192 (APTAVRGRC). A helical transmembrane segment spans residues 193-213 (IGVNAFFIPFGQVISEAIGAG). Residues 214 to 222 (VQDMKNGWR) are Extracellular-facing. A helical transmembrane segment spans residues 223–243 (LLFALGAVPSLFQLILFHYLP). Over 244–325 (ESPRILILRG…TVSLIQMAGQ (82 aa)) the chain is Cytoplasmic. The chain crosses the membrane as a helical span at residues 326–346 (LSGFNTLLYYAGTLFSLLGLT). Residues 347 to 349 (NPA) are Extracellular-facing. Residues 350–370 (LGGLIPAGTNAFFVLVGMTLV) traverse the membrane as a helical segment. The Cytoplasmic portion of the chain corresponds to 371–376 (DKVGRR). Residues 377–397 (GLLMFGVPIMLAGLVWNIVAF) form a helical membrane-spanning segment. Topologically, residues 398-417 (HYLCIPTGGLLDTSYKYDTK) are extracellular. A helical membrane pass occupies residues 418–438 (LVGIVIGGIVFFTTGFGLTYS). Residues 439 to 454 (HLAWYQSEFLALEVRS) are Cytoplasmic-facing. Residues 455–475 (VGSGIATTANWVANLVVSVSY) traverse the membrane as a helical segment. The Extracellular segment spans residues 476 to 485 (LTELETLTPS). The chain crosses the membrane as a helical span at residues 486-506 (GTYGLYLGFSVVFFIFAVFCY). Over 507–590 (PETKQLSIDE…NGAKRFPISR (84 aa)) the chain is Cytoplasmic.

It belongs to the major facilitator superfamily. Sugar transporter (TC 2.A.1.1) family.

Its subcellular location is the cell membrane. It carries out the reaction myo-inositol(out) + H(+)(out) = myo-inositol(in) + H(+)(in). Major transporter for myo-inositol. Plays a role in the traversal of the host blood-brain barrier. This chain is Myo-inositol transporter 3C, found in Cryptococcus neoformans var. grubii serotype A (strain H99 / ATCC 208821 / CBS 10515 / FGSC 9487) (Filobasidiella neoformans var. grubii).